Reading from the N-terminus, the 83-residue chain is Putative beta-neurotoxin RjAa17f (83 aa).

Residues 1–18 form the signal peptide; that stretch reads MKILIFIIASFMLIGVEC. The region spanning 19 to 82 is the LCN-type CS-alpha/beta domain; the sequence is KEGYPMGRNG…VWDFSNIKCR (64 aa). Disulfide bonds link cysteine 29–cysteine 81, cysteine 33–cysteine 55, cysteine 40–cysteine 62, and cysteine 44–cysteine 64.

This sequence belongs to the long (4 C-C) scorpion toxin superfamily. Sodium channel inhibitor family. Beta subfamily. In terms of tissue distribution, expressed by the venom gland.

The protein localises to the secreted. In terms of biological role, beta toxins bind voltage-independently at site-4 of sodium channels (Nav) and shift the voltage of activation toward more negative potentials thereby affecting sodium channel activation and promoting spontaneous and repetitive firing. In Rhopalurus junceus (Caribbean blue scorpion), this protein is Putative beta-neurotoxin RjAa17f.